The sequence spans 421 residues: SH2 domain-containing protein 4A (421 aa).

Phosphoserine occurs at positions 117 and 123. The disordered stretch occupies residues 132 to 271 (DLQAMKKTEP…FLQPLGIPPK (140 aa)). 2 stretches are compositionally biased toward basic and acidic residues: residues 163 to 201 (TRKD…KEDS) and 211 to 230 (KAAD…DYKR). Residue Ser-232 is modified to Phosphoserine. The SH2 domain occupies 315–407 (WFHGILTLKK…LGKELLLYPC (93 aa)).

As to quaternary structure, interacts with ESR1. In terms of tissue distribution, in the kidney, expressed only in the glomerulus. Expressed in T-cells, B-cells, macrophages and dendritic cells (at protein level). In adult, highest levels are found in muscle and lung with lower levels in kidney.

Its subcellular location is the cytoplasm. In terms of biological role, inhibits estrogen-induced cell proliferation by competing with PLCG for binding to ESR1, blocking the effect of estrogen on PLCG and repressing estrogen-induced proliferation. May play a role in T-cell development and function. This is SH2 domain-containing protein 4A (Sh2d4a) from Mus musculus (Mouse).